A 218-amino-acid chain; its full sequence is tRNA (guanine-N(7)-)-methyltransferase (218 aa).

Residues glutamate 45, glutamate 70, aspartate 97, and aspartate 119 each contribute to the S-adenosyl-L-methionine site. The active site involves aspartate 119. Lysine 123 serves as a coordination point for substrate. Positions 125–130 (RHEKRR) are interaction with RNA. Substrate-binding positions include aspartate 155 and 195-198 (TEYE).

It belongs to the class I-like SAM-binding methyltransferase superfamily. TrmB family.

The catalysed reaction is guanosine(46) in tRNA + S-adenosyl-L-methionine = N(7)-methylguanosine(46) in tRNA + S-adenosyl-L-homocysteine. It participates in tRNA modification; N(7)-methylguanine-tRNA biosynthesis. In terms of biological role, catalyzes the formation of N(7)-methylguanine at position 46 (m7G46) in tRNA. The chain is tRNA (guanine-N(7)-)-methyltransferase from Lactobacillus acidophilus (strain ATCC 700396 / NCK56 / N2 / NCFM).